The primary structure comprises 325 residues: Olfactory receptor 5T18 (325 aa).

The Extracellular portion of the chain corresponds to 1 to 22 (MRNITEATFFVLKGLTDNNELQ). Asn-3 carries an N-linked (GlcNAc...) asparagine glycan. Transmembrane regions (helical) follow at residues 23-43 (IILFLLFLAIYIFTLIGNVGL) and 44-64 (IILVVGDSQLHNPMYCFLSVL). Residues 65 to 97 (SSVDACYSTDITPNMLVGFMSKSKIISFYGCAT) are Extracellular-facing. A disulfide bridge connects residues Cys-95 and Cys-187. A helical membrane pass occupies residues 98 to 118 (QMFLAVTFGTTECFLLAAMAY). Residues 119-139 (DRYVAIHDPLLYAVSMSPRVY) lie on the Cytoplasmic side of the membrane. The helical transmembrane segment at 140–160 (IPLIIASYAGGIVHAIIHTVA) threads the bilayer. The Extracellular segment spans residues 161 to 194 (TFSLSFCRSNEVKHIFCDIPPLLAISCSETYVNE). The helical transmembrane segment at 195 to 215 (LLLFFFVSFIELVTILIVLVS) threads the bilayer. Topologically, residues 216–234 (YAFILLSILKMNSSEGRRK) are cytoplasmic. A helical membrane pass occupies residues 235-255 (VFSTCGAHLTAVSIYYGTILF). Topologically, residues 256-269 (MYVRPSSNYSLEHD) are extracellular. Residues 270-290 (MIVSTFYTIGIPMLNPIIYSL) form a helical membrane-spanning segment. The Cytoplasmic portion of the chain corresponds to 291–325 (RNKDVKEAMKRVLRKKINIKHRIKKLNDFSVFLMP).

The protein belongs to the G-protein coupled receptor 1 family.

The protein resides in the cell membrane. Functionally, potential odorant receptor. This Mus musculus (Mouse) protein is Olfactory receptor 5T18.